Here is a 609-residue protein sequence, read N- to C-terminus: 2',5'-phosphodiesterase 12 (609 aa).

The N-terminal 16 residues, 1–16 (MWRLPGVRAALRGVRT), are a transit peptide targeting the mitochondrion. The tract at residues 203–231 (PRAAEPEGGGPSSSSPSSPSPGWTETGVD) is disordered. The segment covering 214 to 224 (SSSSPSSPSPG) has biased composition (low complexity). Ser-217 is modified (phosphoserine). Mg(2+)-binding residues include Glu-351, Asp-496, and Asn-498. Asp-496 (proton donor/acceptor) is an active-site residue.

Belongs to the CCR4/nocturin family. Mg(2+) serves as cofactor. Liver.

The protein resides in the mitochondrion matrix. It carries out the reaction Exonucleolytic cleavage of poly(A) to 5'-AMP.. Functionally, enzyme that cleaves 2',5'-phosphodiester bond linking adenosines of the 5'-triphosphorylated oligoadenylates, triphosphorylated oligoadenylates referred as 2-5A modulates the 2-5A system. Degrades triphosphorylated 2-5A to produce AMP and ATP. Also cleaves 3',5'-phosphodiester bond of oligoadenylates. Plays a role as a negative regulator of the 2-5A system that is one of the major pathways for antiviral and antitumor functions induced by interferons (IFNs). Suppression of this enzyme increases cellular 2-5A levels and decreases viral replication in cultured small-airway epithelial cells. This is 2',5'-phosphodiesterase 12 (PDE12) from Bos taurus (Bovine).